The following is a 612-amino-acid chain: Dihydroxy-acid dehydratase (612 aa).

Aspartate 81 is a Mg(2+) binding site. Residue cysteine 122 coordinates [2Fe-2S] cluster. Mg(2+) contacts are provided by aspartate 123 and lysine 124. The residue at position 124 (lysine 124) is an N6-carboxylysine. [2Fe-2S] cluster is bound at residue cysteine 195. Glutamate 491 is a Mg(2+) binding site. The Proton acceptor role is filled by serine 517.

It belongs to the IlvD/Edd family. In terms of assembly, homodimer. [2Fe-2S] cluster serves as cofactor. Mg(2+) is required as a cofactor.

It carries out the reaction (2R)-2,3-dihydroxy-3-methylbutanoate = 3-methyl-2-oxobutanoate + H2O. The catalysed reaction is (2R,3R)-2,3-dihydroxy-3-methylpentanoate = (S)-3-methyl-2-oxopentanoate + H2O. Its pathway is amino-acid biosynthesis; L-isoleucine biosynthesis; L-isoleucine from 2-oxobutanoate: step 3/4. It participates in amino-acid biosynthesis; L-valine biosynthesis; L-valine from pyruvate: step 3/4. Its function is as follows. Functions in the biosynthesis of branched-chain amino acids. Catalyzes the dehydration of (2R,3R)-2,3-dihydroxy-3-methylpentanoate (2,3-dihydroxy-3-methylvalerate) into 2-oxo-3-methylpentanoate (2-oxo-3-methylvalerate) and of (2R)-2,3-dihydroxy-3-methylbutanoate (2,3-dihydroxyisovalerate) into 2-oxo-3-methylbutanoate (2-oxoisovalerate), the penultimate precursor to L-isoleucine and L-valine, respectively. This chain is Dihydroxy-acid dehydratase, found in Psychromonas ingrahamii (strain DSM 17664 / CCUG 51855 / 37).